The following is a 294-amino-acid chain: ATP synthase gamma chain (294 aa).

Belongs to the ATPase gamma chain family. In terms of assembly, F-type ATPases have 2 components, CF(1) - the catalytic core - and CF(0) - the membrane proton channel. CF(1) has five subunits: alpha(3), beta(3), gamma(1), delta(1), epsilon(1). CF(0) has three main subunits: a, b and c.

The protein resides in the cell inner membrane. In terms of biological role, produces ATP from ADP in the presence of a proton gradient across the membrane. The gamma chain is believed to be important in regulating ATPase activity and the flow of protons through the CF(0) complex. The chain is ATP synthase gamma chain from Campylobacter jejuni subsp. jejuni serotype O:2 (strain ATCC 700819 / NCTC 11168).